We begin with the raw amino-acid sequence, 267 residues long: Eukaryotic translation initiation factor 3 subunit K (267 aa).

One can recognise a PCI domain in the interval 46-233 (FDCYANLALL…EARSEVKSER (188 aa)).

The protein belongs to the eIF-3 subunit K family. Component of the eukaryotic translation initiation factor 3 (eIF-3) complex.

The protein resides in the cytoplasm. Component of the eukaryotic translation initiation factor 3 (eIF-3) complex, which is involved in protein synthesis of a specialized repertoire of mRNAs and, together with other initiation factors, stimulates binding of mRNA and methionyl-tRNAi to the 40S ribosome. The eIF-3 complex specifically targets and initiates translation of a subset of mRNAs involved in cell proliferation. The chain is Eukaryotic translation initiation factor 3 subunit K from Aspergillus niger (strain ATCC MYA-4892 / CBS 513.88 / FGSC A1513).